Here is a 491-residue protein sequence, read N- to C-terminus: Ketol-acid reductoisomerase (NADP(+)) (491 aa).

The KARI N-terminal Rossmann domain maps to 15–208 (AQLGKCRFMA…GGHRAGVLES (194 aa)). NADP(+) contacts are provided by residues 45–48 (CGAQ), Arg68, Arg76, Ser78, and 108–110 (DKQ). His132 is an active-site residue. Gly158 is an NADP(+) binding site. KARI C-terminal knotted domains are found at residues 209–344 (SFVA…NAPQ) and 345–484 (FEGK…MTDM). Residues Asp217, Glu221, Glu389, and Glu393 each contribute to the Mg(2+) site. Substrate is bound at residue Ser414.

It belongs to the ketol-acid reductoisomerase family. Mg(2+) serves as cofactor.

It catalyses the reaction (2R)-2,3-dihydroxy-3-methylbutanoate + NADP(+) = (2S)-2-acetolactate + NADPH + H(+). The catalysed reaction is (2R,3R)-2,3-dihydroxy-3-methylpentanoate + NADP(+) = (S)-2-ethyl-2-hydroxy-3-oxobutanoate + NADPH + H(+). Its pathway is amino-acid biosynthesis; L-isoleucine biosynthesis; L-isoleucine from 2-oxobutanoate: step 2/4. It participates in amino-acid biosynthesis; L-valine biosynthesis; L-valine from pyruvate: step 2/4. In terms of biological role, involved in the biosynthesis of branched-chain amino acids (BCAA). Catalyzes an alkyl-migration followed by a ketol-acid reduction of (S)-2-acetolactate (S2AL) to yield (R)-2,3-dihydroxy-isovalerate. In the isomerase reaction, S2AL is rearranged via a Mg-dependent methyl migration to produce 3-hydroxy-3-methyl-2-ketobutyrate (HMKB). In the reductase reaction, this 2-ketoacid undergoes a metal-dependent reduction by NADPH to yield (R)-2,3-dihydroxy-isovalerate. This is Ketol-acid reductoisomerase (NADP(+)) from Serratia proteamaculans (strain 568).